Here is a 482-residue protein sequence, read N- to C-terminus: BTB/POZ domain and ankyrin repeat-containing protein NOOT1 (482 aa).

One can recognise a BTB domain in the interval Ser25–Pro107. A C2HC NPR-type zinc finger spans residues Arg113–Thr127. Zn(2+) is bound by residues Cys116, Cys121, His123, and Cys126. 4 ANK repeats span residues Gln249–Asp278, Glu279–Phe308, Thr313–Val342, and Asp346–Leu380. The tract at residues Glu395–Asn434 is disordered. Low complexity predominate over residues Asn398 to Asn415.

It belongs to the plant 'ANKYRIN-BTB/POZ' family. 'NOOT-BOP-COCH-like' (NBCL) subfamily. As to quaternary structure, homodimer. As to expression, expressed in the shoot apical meristem (SAM) at the base of the developing leaf where stipules are formed. Associated with functional and vestigial abscission zones (AZs), including pulvini.

The protein resides in the nucleus. It is found in the cytoplasm. It localises to the cell membrane. The protein operates within protein modification; protein ubiquitination. In terms of biological role, may act as a substrate-specific adapter of an E3 ubiquitin-protein ligase complex (CUL3-RBX1-BTB) which mediates the ubiquitination and subsequent proteasomal degradation of target proteins. Transcriptional co-regulator involved in the promotion of leaf and floral meristem fate and determinacy. Promotes normal stipule growth and development. Required for the abscission of senescent organs, probably by regulating the cell wall disorganization in abscission zones (AZs, e.g. pulvini at the base of leaves). Involved in the coordination of the symbiotic nodule developmental program. Promotes the formation of root nodules by interacting directly with APP1 to modulate the expression of the nuclear transcription factor Y subunit (NF-YA1), a key nodulin. Necessary for the robust maintenance of nodule identity throughout the nodule developmental program. Involved in the regulation of indeterminate nodule identity in association with NOOT2. The sequence is that of BTB/POZ domain and ankyrin repeat-containing protein NOOT1 from Medicago truncatula (Barrel medic).